Here is a 142-residue protein sequence, read N- to C-terminus: Ribosomal RNA large subunit methyltransferase H (142 aa).

Gly89 provides a ligand contact to S-adenosyl-L-methionine.

It belongs to the RNA methyltransferase RlmH family. Homodimer.

The protein localises to the cytoplasm. The catalysed reaction is pseudouridine(1915) in 23S rRNA + S-adenosyl-L-methionine = N(3)-methylpseudouridine(1915) in 23S rRNA + S-adenosyl-L-homocysteine + H(+). In terms of biological role, specifically methylates the pseudouridine at position 1915 (m3Psi1915) in 23S rRNA. The polypeptide is Ribosomal RNA large subunit methyltransferase H (Zymomonas mobilis subsp. mobilis (strain ATCC 31821 / ZM4 / CP4)).